The chain runs to 271 residues: D-methionine-binding lipoprotein MetQ (271 aa).

The first 22 residues, 1-22 (MAFKFKTFAAVGALIGSLALVG), serve as a signal peptide directing secretion. The N-palmitoyl cysteine moiety is linked to residue Cys-23. Residue Cys-23 is the site of S-diacylglycerol cysteine attachment.

The protein belongs to the NlpA lipoprotein family.

The protein localises to the cell membrane. Its function is as follows. This protein is a component of a D-methionine permease, a binding protein-dependent, ATP-driven transport system. The polypeptide is D-methionine-binding lipoprotein MetQ (metQ) (Escherichia coli (strain K12)).